Reading from the N-terminus, the 926-residue chain is Storkhead-box protein 2 (926 aa).

Disordered stretches follow at residues 1–32 (MKKT…RSEK), 338–394 (EEEK…IPGG), 452–529 (EMPF…SYVD), 632–693 (GVKK…SLDK), 724–803 (LKSH…GTMQ), and 825–926 (LAPK…VTSV). Residues 18 to 32 (FSDRASDRMRSRSEK) show a composition bias toward basic and acidic residues. Positions 353–378 (HSGRSKKSRTHRKSHGKSRSHSKTRV) are enriched in basic residues. Over residues 379 to 394 (SKGDPSDGSHLDIPGG) the composition is skewed to basic and acidic residues. The segment covering 463 to 472 (SHSKVHRSHS) has biased composition (basic residues). The segment covering 473 to 495 (HTQDRRSRNERSNKAKERSRSMD) has biased composition (basic and acidic residues). Over residues 518 to 529 (QDDQTPSQSYVD) the composition is skewed to polar residues. 2 stretches are compositionally biased toward basic and acidic residues: residues 632 to 658 (GVKK…EESP) and 684 to 693 (HGAEPSSLDK). A compositionally biased stretch (polar residues) spans 746–772 (LGTSAAQATPASQRQQESGGNQETSFD). A compositionally biased stretch (basic and acidic residues) spans 785–799 (GANKNTEEEKNREDV). Composition is skewed to polar residues over residues 847–884 (MDSS…QNPA) and 914–926 (KPSN…VTSV).

The polypeptide is Storkhead-box protein 2 (STOX2) (Macaca fascicularis (Crab-eating macaque)).